The following is a 313-amino-acid chain: Beta-ribofuranosylphenol 5'-phosphate synthase (313 aa).

This sequence belongs to the beta-RFA-P synthase family. As to quaternary structure, homodimer.

The catalysed reaction is 5-phospho-alpha-D-ribose 1-diphosphate + 4-hydroxybenzoate + H(+) = 4-(beta-D-ribofuranosyl)phenol 5'-phosphate + CO2 + diphosphate. It carries out the reaction 4-aminobenzoate + 5-phospho-alpha-D-ribose 1-diphosphate + H(+) = 4-(beta-D-ribofuranosyl)aminobenzene 5'-phosphate + CO2 + diphosphate. It functions in the pathway cofactor biosynthesis; 5,6,7,8-tetrahydromethanopterin biosynthesis. In terms of biological role, catalyzes the condensation of 4-hydroxybenzoate (HB) with 5-phospho-alpha-D-ribose 1-diphosphate (PRPP) to produce beta-ribofuranosylphenol 5'-phosphate (beta-RFH-P). Also catalyzes the condensation of 4-aminobenzoate (pABA) with PRPP to produce beta-ribofuranosylaminobenzene 5'-phosphate (beta-RFA-P). This Archaeoglobus fulgidus (strain ATCC 49558 / DSM 4304 / JCM 9628 / NBRC 100126 / VC-16) protein is Beta-ribofuranosylphenol 5'-phosphate synthase.